A 99-amino-acid polypeptide reads, in one-letter code: Protein dpy-30 homolog (99 aa).

The residue at position 1 (methionine 1) is an N-acetylmethionine. The segment at 1–26 (MEPEQMLEGQTQVAENPHSEYGLTDN) is disordered. Position 19 is a phosphoserine (serine 19). Lysine 35 carries the N6-acetyllysine; alternate modification. Residue lysine 35 forms a Glycyl lysine isopeptide (Lys-Gly) (interchain with G-Cter in SUMO2); alternate linkage.

Belongs to the dpy-30 family. As to quaternary structure, homodimer. Core component of several methyltransferase-containing complexes including MLL1/MLL, MLL2/3 (also named ASCOM complex) and MLL4/WBP7. Each complex is at least composed of ASH2L, RBBP5, WDR5, DPY30, one or more specific histone methyltransferases (KMT2A/MLL1, KMT2D/MLL2, KMT2C/MLL3 and KMT2B/MLL4), and the facultative components MEN1, HCFC1, HCFC2, NCOA6, KDM6A, PAXIP1/PTIP, PAGR1 and alpha- and beta-tubulin. Interacts with ASH2L; the interaction is direct. Interacts with ARFGEF1. Component of the SET1 complex, at least composed of the catalytic subunit (SETD1A or SETD1B), WDR5, WDR82, RBBP5, ASH2L/ASH2, CXXC1/CFP1, HCFC1 and DPY30.

It is found in the nucleus. The protein localises to the golgi apparatus. Its subcellular location is the trans-Golgi network. Its function is as follows. As part of the MLL1/MLL complex, involved in the methylation of histone H3 at 'Lys-4', particularly trimethylation. Histone H3 'Lys-4' methylation represents a specific tag for epigenetic transcriptional activation. May play some role in histone H3 acetylation. In embryonic stem cells, may play a crucial role in retinoic acid-induced differentiation along the neural lineage, regulating gene induction and H3 'Lys-4' methylation at key developmental loci. May also play an indirect or direct role in endosomal transport. This chain is Protein dpy-30 homolog (DPY30), found in Bos taurus (Bovine).